An 896-amino-acid polypeptide reads, in one-letter code: Trehalose-phosphatase (896 aa).

A glycosyltransferase region spans residues 1 to 554 (MTTTAQDNSP…SNDDMERKMT (554 aa)).

It in the N-terminal section; belongs to the glycosyltransferase 20 family. This sequence in the C-terminal section; belongs to the trehalose phosphatase family. In terms of assembly, the trehalose synthase complex is composed of the two catalytic subunits TPS1 and TPS2, and at least one of the two regulatory subunits TPS3 or TSL1. The cofactor is Mg(2+).

Its subcellular location is the cytoplasm. It carries out the reaction alpha,alpha-trehalose 6-phosphate + H2O = alpha,alpha-trehalose + phosphate. Its pathway is carbohydrate biosynthesis. With respect to regulation, inhibited by EDTA. In terms of biological role, phosphatase catalytic subunit of the trehalose synthase complex that catalyzes the production of trehalose from glucose-6-phosphate and UDP-alpha-D-glucose in a two step process. The chain is Trehalose-phosphatase from Saccharomyces cerevisiae (strain ATCC 204508 / S288c) (Baker's yeast).